We begin with the raw amino-acid sequence, 34 residues long: Kappa-theraphotoxin-Sc1a (34 aa).

Intrachain disulfides connect Cys2/Cys16, Cys9/Cys21, and Cys15/Cys28. Ile34 carries the isoleucine amide modification.

The protein belongs to the neurotoxin 10 (Hwtx-1) family. 57 (ScTx1) subfamily. In terms of tissue distribution, expressed by the venom gland.

Its subcellular location is the secreted. Its function is as follows. Acts as a gating-modifier to inhibit voltage-gated potassium channels. It inhibits delayed Kv2.1/KCNB1 (IC(50) is 12.7 nM), Kv2.1/Kv9.3 (IC(50) is 7.2 nM) (KCNB1/KCNS3), Kv2.2/KCNB2 (IC(50) is 21.4 nM), and transient Kv4.2/KCND2 (IC(50) is 1.2 nM) channels. The protein is Kappa-theraphotoxin-Sc1a of Stromatopelma calceatum (Featherleg baboon tarantula).